The sequence spans 122 residues: Ribonuclease P protein component (122 aa).

It belongs to the RnpA family. Consists of a catalytic RNA component (M1 or rnpB) and a protein subunit.

It carries out the reaction Endonucleolytic cleavage of RNA, removing 5'-extranucleotides from tRNA precursor.. RNaseP catalyzes the removal of the 5'-leader sequence from pre-tRNA to produce the mature 5'-terminus. It can also cleave other RNA substrates such as 4.5S RNA. The protein component plays an auxiliary but essential role in vivo by binding to the 5'-leader sequence and broadening the substrate specificity of the ribozyme. The sequence is that of Ribonuclease P protein component from Roseiflexus sp. (strain RS-1).